The primary structure comprises 170 residues: Small capsomere-interacting protein (170 aa).

Residues 76–88 are compositionally biased toward basic and acidic residues; sequence TLRDQKPRERADR. Positions 76-170 are disordered; it reads TLRDQKPRER…ARKPPSGKKK (95 aa). Over residues 110 to 139 the composition is skewed to polar residues; sequence SGTTPGGQDSLGVSGSSITTLSSGPHSLSP. Residues 144–155 show a composition bias toward low complexity; it reads LTTLSSTTETAA.

The protein belongs to the herpesviridae small capsomere-interacting protein family. As to quaternary structure, interacts with the major capsid protein/MCP.

It localises to the virion. It is found in the host nucleus. Its function is as follows. Participates in the assembly of the infectious particles by decorating the outer surface of the capsid shell and thus forming a layer between the capsid and the tegument. Complexes composed of the major capsid protein and small capsomere-interacting protein/SCP assemble together in the host cytoplasm and are translocated to the nucleus, where they accumulate and participate in capsid assembly. The polypeptide is Small capsomere-interacting protein (Homo sapiens (Human)).